A 187-amino-acid polypeptide reads, in one-letter code: Elongation factor P (187 aa).

This sequence belongs to the elongation factor P family.

The protein localises to the cytoplasm. The protein operates within protein biosynthesis; polypeptide chain elongation. In terms of biological role, involved in peptide bond synthesis. Stimulates efficient translation and peptide-bond synthesis on native or reconstituted 70S ribosomes in vitro. Probably functions indirectly by altering the affinity of the ribosome for aminoacyl-tRNA, thus increasing their reactivity as acceptors for peptidyl transferase. The polypeptide is Elongation factor P (Arthrobacter sp. (strain FB24)).